Consider the following 491-residue polypeptide: Ketol-acid reductoisomerase (NADP(+)) (491 aa).

The KARI N-terminal Rossmann domain occupies 15–208 (AQLGKCRFMG…GGHRAGVLES (194 aa)). NADP(+) is bound by residues 45–48 (CGAQ), arginine 68, arginine 76, serine 78, and 108–110 (DKQ). The active site involves histidine 132. Glycine 158 is an NADP(+) binding site. 2 KARI C-terminal knotted domains span residues 209–344 (SFVA…TAPQ) and 345–484 (YEGK…MTDM). Mg(2+) contacts are provided by aspartate 217, glutamate 221, glutamate 389, and glutamate 393. Serine 414 is a substrate binding site.

It belongs to the ketol-acid reductoisomerase family. Mg(2+) is required as a cofactor.

It carries out the reaction (2R)-2,3-dihydroxy-3-methylbutanoate + NADP(+) = (2S)-2-acetolactate + NADPH + H(+). The catalysed reaction is (2R,3R)-2,3-dihydroxy-3-methylpentanoate + NADP(+) = (S)-2-ethyl-2-hydroxy-3-oxobutanoate + NADPH + H(+). It participates in amino-acid biosynthesis; L-isoleucine biosynthesis; L-isoleucine from 2-oxobutanoate: step 2/4. Its pathway is amino-acid biosynthesis; L-valine biosynthesis; L-valine from pyruvate: step 2/4. Functionally, involved in the biosynthesis of branched-chain amino acids (BCAA). Catalyzes an alkyl-migration followed by a ketol-acid reduction of (S)-2-acetolactate (S2AL) to yield (R)-2,3-dihydroxy-isovalerate. In the isomerase reaction, S2AL is rearranged via a Mg-dependent methyl migration to produce 3-hydroxy-3-methyl-2-ketobutyrate (HMKB). In the reductase reaction, this 2-ketoacid undergoes a metal-dependent reduction by NADPH to yield (R)-2,3-dihydroxy-isovalerate. The protein is Ketol-acid reductoisomerase (NADP(+)) of Escherichia coli (strain 55989 / EAEC).